The sequence spans 356 residues: Cyanuric acid amidohydrolase (356 aa).

Residues 1–99 (MPIAKVHRIA…FLVFERAEGN (99 aa)) are RU A. Substrate is bound by residues Arg-52 and 79–80 (SG). Residues 106–243 (ALAIGRAHTP…HEIVVLGMSE (138 aa)) form an RU B region. Lys-156 is an active-site residue. Residues Arg-188 and 226–227 (SS) each bind substrate. The Nucleophile role is filled by Ser-226. Residues 249 to 356 (LAIAHGVMAD…VAVIAARTMG (108 aa)) form an RU C region. Glu-287 provides a ligand contact to Mg(2+). Substrate-binding positions include Arg-314 and 333–334 (SG). Mg(2+)-binding residues include Gly-336, Gln-339, Gly-340, Pro-341, and Gly-344.

It belongs to the cyclic amide hydrolase (CyAH) family. In terms of assembly, homotetramer.

The enzyme catalyses cyanurate + H2O = 1-carboxybiuret + H(+). The protein operates within xenobiotic degradation; atrazine degradation; biuret from cyanurate: step 1/1. With respect to regulation, inhibited by barbituric acid. Responsible for the hydrolysis of cyanuric acid, an intermediate formed during catabolism of s-triazine based compounds in herbicides such as atrazine and polymers such as melamine. Catalyzes the hydrolytic opening of the s-triazine ring of cyanuric acid (2,4,6-trihydroxy-s-triazine) to yield carbon dioxide and carboxybiuret, which spontaneously decarboxylates to biuret. The protein is Cyanuric acid amidohydrolase of Azorhizobium caulinodans (strain ATCC 43989 / DSM 5975 / JCM 20966 / LMG 6465 / NBRC 14845 / NCIMB 13405 / ORS 571).